A 195-amino-acid polypeptide reads, in one-letter code: Imidazoleglycerol-phosphate dehydratase (195 aa).

This sequence belongs to the imidazoleglycerol-phosphate dehydratase family.

It is found in the cytoplasm. The enzyme catalyses D-erythro-1-(imidazol-4-yl)glycerol 3-phosphate = 3-(imidazol-4-yl)-2-oxopropyl phosphate + H2O. Its pathway is amino-acid biosynthesis; L-histidine biosynthesis; L-histidine from 5-phospho-alpha-D-ribose 1-diphosphate: step 6/9. This is Imidazoleglycerol-phosphate dehydratase from Clostridium botulinum (strain Alaska E43 / Type E3).